A 412-amino-acid polypeptide reads, in one-letter code: STAGA complex 65 subunit gamma (412 aa).

The tract at residues 81–107 (AQTQSQQQTEGVKAEESEPLPSCPGSP) is disordered. Ser-106 is modified (phosphoserine). Residue Lys-269 forms a Glycyl lysine isopeptide (Lys-Gly) (interchain with G-Cter in SUMO2) linkage. Phosphoserine occurs at positions 321 and 332. Positions 364 to 412 (EEPMSGMSEAGLPQSPDDSDSSYGSHSTDSLMGSSPVFNQRCRKRMRKI) are disordered. Residues 384-393 (SSYGSHSTDS) show a composition bias toward low complexity.

In terms of assembly, component of the STAGA transcription coactivator-HAT complex, at least composed of SUPT3H, SUPT7L, GCN5L2, TAF5L, TAF6L, TADA3L, TAD1L, TAF10, TAF12 and TAF9. Sumoylated.

It is found in the nucleus. This Mus musculus (Mouse) protein is STAGA complex 65 subunit gamma (Supt7l).